The chain runs to 498 residues: Meiosis-specific nuclear structural protein 1 (498 aa).

Coiled coils occupy residues Lys-45 to Glu-211, Leu-270 to Glu-348, and Asp-385 to Ile-450.

This sequence belongs to the MNS1 family.

It is found in the nucleus. It localises to the cytoplasm. The protein localises to the cytoskeleton. The protein resides in the cilium axoneme. Its subcellular location is the flagellum axoneme. Functionally, microtubule inner protein (MIP) part of the dynein-decorated doublet microtubules (DMTs) in cilia axoneme, which is required for motile cilia beating. May play a role in the control of meiotic division and germ cell differentiation through regulation of pairing and recombination during meiosis. Required for sperm flagella assembly. May play a role in the assembly and function of the outer dynein arm-docking complex (ODA-DC). ODA-DC mediates outer dynein arms (ODA) binding onto the axonemal doublet microtubules. The protein is Meiosis-specific nuclear structural protein 1 (mns1) of Xenopus tropicalis (Western clawed frog).